A 459-amino-acid polypeptide reads, in one-letter code: Diaminopimelate decarboxylase (459 aa).

K89 bears the N6-(pyridoxal phosphate)lysine mark. Pyridoxal 5'-phosphate is bound by residues G271 and 313–316 (EPGR). The substrate site is built by R316, R357, and Y361. C388 acts as the Proton donor in catalysis. Substrate is bound by residues E389 and Y418. Residue Y418 participates in pyridoxal 5'-phosphate binding.

The protein belongs to the Orn/Lys/Arg decarboxylase class-II family. LysA subfamily. Homodimer. Pyridoxal 5'-phosphate is required as a cofactor.

The catalysed reaction is meso-2,6-diaminopimelate + H(+) = L-lysine + CO2. It functions in the pathway amino-acid biosynthesis; L-lysine biosynthesis via DAP pathway; L-lysine from DL-2,6-diaminopimelate: step 1/1. Specifically catalyzes the decarboxylation of meso-diaminopimelate (meso-DAP) to L-lysine. In Corynebacterium efficiens (strain DSM 44549 / YS-314 / AJ 12310 / JCM 11189 / NBRC 100395), this protein is Diaminopimelate decarboxylase.